The sequence spans 98 residues: Small ribosomal subunit protein uS19 (98 aa).

Disordered regions lie at residues 1 to 30 (MARS…KKSV) and 78 to 98 (RTFH…PAKK). Over residues 9–24 (PFADKHLTKKVEDANK) the composition is skewed to basic and acidic residues.

Belongs to the universal ribosomal protein uS19 family.

Functionally, protein S19 forms a complex with S13 that binds strongly to the 16S ribosomal RNA. The polypeptide is Small ribosomal subunit protein uS19 (Anaeromyxobacter dehalogenans (strain 2CP-1 / ATCC BAA-258)).